We begin with the raw amino-acid sequence, 449 residues long: VIRF-1 (449 aa).

The segment at 1–60 is disordered; sequence MDPGQRPNPFGAPGAIPKKPCLSQGSPGTSGSGAPCDEPSRSESPGEGPSGTGGSAAAGD. The segment at residues 89-195 is a DNA-binding region (IRF tryptophan pentad repeat); it reads KASIKDWIVC…HHFLVFRVRK (107 aa). Residues Lys406 and Lys442 each carry the N6-propionyllysine; by host modification.

This sequence belongs to the IRF family. Forms homodimers. Interacts with host IRF3, IRF7, and CREBBP. Interacts with host SYNCRIP. Interacts with host USP7. Interacts (via C-terminus) with host HERC5. Interacts with host GABARAPL1. Interacts with host SIRT6. In terms of processing, ISGylated. Post-translationally, propionylated in lysine residues Lys-406 and Lys-442, which is required for effective inhibition of IFN-beta production and antiviral signaling.

It localises to the host cytoplasm. In terms of biological role, plays a role in the inhibition of host innate response by repressing the expression of interferon-inducible genes and blocking host IRF1- and IRF3-mediated transcription. Blocks the interaction between host IRF3 and CREBBP. Regulates the host cellular metabolism by increasing glucose uptake, ATP production and lactate secretion through down-regulation of heterogeneous nuclear ribonuclear protein Q1/SYNCRIP. Mechanistically, induces ubiquitination and degradation of SYNCRIP through the ubiquitin-proteasome pathway by recruiting KLHL3/CUL3 ubiquitin ligase complex. Disrupts host TP53 signaling pathway during viral infection by interacting with host USP7 and thereby decreasing the availability of USP7 for deubiquitinating and stabilizing TP53. Plays a role in the global inhibition of protein ISGylation by interacting with host HERC5 leading to its inhibition. Promotes its own propionylation by blocking SIRT6 interaction with ubiquitin-specific peptidase 10/USP10 leading to SIRT6 degradation via a ubiquitin-proteasome pathway. In turn, propionylation is required to block IRF3-CBP/p300 recruitment and to repress the STING DNA sensing pathway. Plays a role in the activation of mitophagy during infection via interaction with the host proteins NIX/BNIP3L, TUFM and GABARAPL1 thereby inhibiting antiviral responses and contributing to productive replication. In Homo sapiens (Human), this protein is VIRF-1 (vIRF-1).